Here is a 272-residue protein sequence, read N- to C-terminus: Catabolic 3-dehydroquinate dehydratase (272 aa).

3-dehydroquinate-binding positions include 66–68 and Arg-102; that span reads EFR. His-163 functions as the Proton donor/acceptor in the catalytic mechanism. Lys-190 functions as the Schiff-base intermediate with substrate in the catalytic mechanism. 3-dehydroquinate-binding residues include Arg-232, Ser-251, and Gln-255.

This sequence belongs to the type-I 3-dehydroquinase family.

It catalyses the reaction 3-dehydroquinate = 3-dehydroshikimate + H2O. It participates in aromatic compound metabolism; 3,4-dihydroxybenzoate biosynthesis; 3,4-dihydroxybenzoate from 3-dehydroquinate: step 1/2. Its function is as follows. Involved in the biosynthesis of protocatechuate. Catalyzes the catabolic dehydration of 3-dehydroquinate (DHQ) to yield 3-dehydroshikimate. In Acinetobacter baylyi (strain ATCC 33305 / BD413 / ADP1), this protein is Catabolic 3-dehydroquinate dehydratase.